Reading from the N-terminus, the 95-residue chain is Small ribosomal subunit protein uS19 (95 aa).

This sequence belongs to the universal ribosomal protein uS19 family.

Its function is as follows. Protein S19 forms a complex with S13 that binds strongly to the 16S ribosomal RNA. In Thermodesulfovibrio yellowstonii (strain ATCC 51303 / DSM 11347 / YP87), this protein is Small ribosomal subunit protein uS19.